The primary structure comprises 65 residues: Large ribosomal subunit protein uL29 (65 aa).

The protein belongs to the universal ribosomal protein uL29 family.

This Bacteroides thetaiotaomicron (strain ATCC 29148 / DSM 2079 / JCM 5827 / CCUG 10774 / NCTC 10582 / VPI-5482 / E50) protein is Large ribosomal subunit protein uL29.